A 214-amino-acid polypeptide reads, in one-letter code: Orotate phosphoribosyltransferase (214 aa).

Position 26 (lysine 26) interacts with 5-phospho-alpha-D-ribose 1-diphosphate. Residue 34–35 coordinates orotate; sequence FF. Residues 72–73, arginine 99, lysine 100, lysine 103, histidine 105, and 124–132 each bind 5-phospho-alpha-D-ribose 1-diphosphate; these read YK and DDVITAGTA. The orotate site is built by threonine 128 and arginine 156.

It belongs to the purine/pyrimidine phosphoribosyltransferase family. PyrE subfamily. As to quaternary structure, homodimer. Requires Mg(2+) as cofactor.

The enzyme catalyses orotidine 5'-phosphate + diphosphate = orotate + 5-phospho-alpha-D-ribose 1-diphosphate. The protein operates within pyrimidine metabolism; UMP biosynthesis via de novo pathway; UMP from orotate: step 1/2. Functionally, catalyzes the transfer of a ribosyl phosphate group from 5-phosphoribose 1-diphosphate to orotate, leading to the formation of orotidine monophosphate (OMP). The protein is Orotate phosphoribosyltransferase of Mannheimia succiniciproducens (strain KCTC 0769BP / MBEL55E).